A 159-amino-acid polypeptide reads, in one-letter code: Nucleotide-binding protein PST_3153 (159 aa).

It belongs to the YajQ family.

Nucleotide-binding protein. The sequence is that of Nucleotide-binding protein PST_3153 from Stutzerimonas stutzeri (strain A1501) (Pseudomonas stutzeri).